A 243-amino-acid chain; its full sequence is MIINYKFSDFYFDKKLSGKEVEFSIQIQKREASSDKNLQSKNLIIDAINVQRDFSEKNKSSDNLEILNKQIEDKNDLIINLEKKVFDLTLENKKNIDDFNEKAKSFAKKAQEELDKYKLELKSFLENEFEEKKKFSFQKLFENIINPLNNFRLAIDAGSKQENSSIKSYVQGFEMLLNQTINILESYGLIIIRPEIGDTFNPEVHNAVELREEGTPNRILKINSLGYQFHERVLKPASVIVSK.

The protein belongs to the GrpE family. Homodimer.

It localises to the cytoplasm. In terms of biological role, participates actively in the response to hyperosmotic and heat shock by preventing the aggregation of stress-denatured proteins, in association with DnaK and GrpE. It is the nucleotide exchange factor for DnaK and may function as a thermosensor. Unfolded proteins bind initially to DnaJ; upon interaction with the DnaJ-bound protein, DnaK hydrolyzes its bound ATP, resulting in the formation of a stable complex. GrpE releases ADP from DnaK; ATP binding to DnaK triggers the release of the substrate protein, thus completing the reaction cycle. Several rounds of ATP-dependent interactions between DnaJ, DnaK and GrpE are required for fully efficient folding. The sequence is that of Protein GrpE from Mycoplasma mobile (strain ATCC 43663 / 163K / NCTC 11711) (Mesomycoplasma mobile).